A 326-amino-acid polypeptide reads, in one-letter code: Malate dehydrogenase (326 aa).

12–18 contributes to the NAD(+) binding site; it reads GGTGQIA. Residues arginine 93 and arginine 99 each coordinate substrate. NAD(+)-binding positions include asparagine 106, glutamine 113, and 130–132; that span reads VGN. Residues asparagine 132 and arginine 163 each contribute to the substrate site. Histidine 188 functions as the Proton acceptor in the catalytic mechanism.

The protein belongs to the LDH/MDH superfamily. MDH type 2 family.

The enzyme catalyses (S)-malate + NAD(+) = oxaloacetate + NADH + H(+). Functionally, catalyzes the reversible oxidation of malate to oxaloacetate. The sequence is that of Malate dehydrogenase from Chlamydia trachomatis serovar D (strain ATCC VR-885 / DSM 19411 / UW-3/Cx).